Consider the following 250-residue polypeptide: Heat stress transcription factor C-1b (250 aa).

A coiled-coil region spans residues 129–182 (EEGEEVRGTIEAVQRLREEQRGMEEELQAMDQRLRAAESRPGQMMAFLAKLADE). The segment at 144 to 180 (LREEQRGMEEELQAMDQRLRAAESRPGQMMAFLAKLA) is hydrophobic repeat HR-A/B. The interval 199-226 (AAGNNGSDPCKRRRIGADTGRGGVATGG) is disordered. The Nuclear localization signal motif lies at 209–212 (KRRR).

This sequence belongs to the HSF family. Class C subfamily. Homotrimer. Exhibits temperature-dependent phosphorylation.

It is found in the nucleus. Its function is as follows. Transcriptional regulator that specifically binds DNA of heat shock promoter elements (HSE). The chain is Heat stress transcription factor C-1b (HSFC1B) from Oryza sativa subsp. japonica (Rice).